The sequence spans 309 residues: Elongation factor Ts (309 aa).

Positions Thr82–Val85 are involved in Mg(2+) ion dislocation from EF-Tu.

This sequence belongs to the EF-Ts family.

It is found in the cytoplasm. In terms of biological role, associates with the EF-Tu.GDP complex and induces the exchange of GDP to GTP. It remains bound to the aminoacyl-tRNA.EF-Tu.GTP complex up to the GTP hydrolysis stage on the ribosome. The sequence is that of Elongation factor Ts from Rickettsia massiliae (strain Mtu5).